The following is a 226-amino-acid chain: 7-cyano-7-deazaguanine synthase (226 aa).

Position 12–22 (12–22) interacts with ATP; sequence LSGGLDSATVV. Positions 191, 201, 204, and 207 each coordinate Zn(2+).

It belongs to the QueC family. Requires Zn(2+) as cofactor.

It catalyses the reaction 7-carboxy-7-deazaguanine + NH4(+) + ATP = 7-cyano-7-deazaguanine + ADP + phosphate + H2O + H(+). It participates in purine metabolism; 7-cyano-7-deazaguanine biosynthesis. Functionally, catalyzes the ATP-dependent conversion of 7-carboxy-7-deazaguanine (CDG) to 7-cyano-7-deazaguanine (preQ(0)). This Pseudomonas syringae pv. tomato (strain ATCC BAA-871 / DC3000) protein is 7-cyano-7-deazaguanine synthase.